Reading from the N-terminus, the 624-residue chain is Membrane protein insertase YidC (624 aa).

Residues 8–28 traverse the membrane as a helical segment; that stretch reads MIIAIALSLAVLLGWNYFVTA. A disordered region spans residues 36 to 95; it reads QQQAAQVNPSQGVNPSQGVDPSQGVNASPSPKEGGPSAPVPGTLPGAAGGSPQAALARDE. Residues 43–64 are compositionally biased toward polar residues; the sequence is NPSQGVNPSQGVDPSQGVNASP. 5 helical membrane-spanning segments follow: residues 370-390, 396-416, 470-490, 526-542, and 559-579; these read FDLLIDWGWFYFITKPMFKAL, LFGNFGVSILVVTLILKLFFL, WPVLIQIPVFFSLYKVLFVTI, LLHLGVWPIVMGITMFL, and FTFMPIIFTFMLGSFPAGLVI.

The protein belongs to the OXA1/ALB3/YidC family. Type 1 subfamily. Interacts with the Sec translocase complex via SecD. Specifically interacts with transmembrane segments of nascent integral membrane proteins during membrane integration.

The protein localises to the cell inner membrane. Required for the insertion and/or proper folding and/or complex formation of integral membrane proteins into the membrane. Involved in integration of membrane proteins that insert both dependently and independently of the Sec translocase complex, as well as at least some lipoproteins. Aids folding of multispanning membrane proteins. This is Membrane protein insertase YidC from Methylobacterium sp. (strain 4-46).